The primary structure comprises 767 residues: Syn-copalyl diphosphate synthase (767 aa).

Residues 45–74 (GPMLISKSPPYPASEETREWEAEGQHEHTD) form a disordered region. Residues 59–74 (EETREWEAEGQHEHTD) are compositionally biased toward basic and acidic residues. Lys233 contributes to the substrate binding site. Positions 365 and 367 each coordinate Mg(2+). The DXDD motif signature appears at 365–368 (DIDD). Residue Lys453 participates in substrate binding.

Mg(2+) is required as a cofactor.

The enzyme catalyses (2E,6E,10E)-geranylgeranyl diphosphate = 9alpha-copalyl diphosphate. Functionally, catalyzes the conversion of geranylgeranyl diphosphate to the phytoalexin precursor syn-copalyl diphosphate. In Oryza sativa subsp. indica (Rice), this protein is Syn-copalyl diphosphate synthase (CPS4).